We begin with the raw amino-acid sequence, 234 residues long: Protein SSP120 (234 aa).

The N-terminal stretch at 1 to 22 (MRFLRGFVFSLAFTLYKVTATA) is a signal peptide. EF-hand domains follow at residues 52–87 (LKDY…NREE) and 108–143 (MAKR…GNKF). T212 is modified (phosphothreonine).

This is Protein SSP120 (SSP120) from Saccharomyces cerevisiae (strain ATCC 204508 / S288c) (Baker's yeast).